A 482-amino-acid polypeptide reads, in one-letter code: Tektin (482 aa).

Coiled coils occupy residues 100 to 129 (CLAEVISEIAELLSTKKRLEERNGKVQAKI), 171 to 204 (ARAVAQVDREVAQLEAVRAKLEADLRDKTEALRV), 282 to 324 (RLNE…ALTS), 376 to 407 (VKVAAVDREIAALDATAAQLESNIADKDDALR), and 441 to 478 (RTQTLARIRELEASLTSARREREAMESSIRQLRDTMGG). Residues 311–330 (EQARAKGQRSALTSALDDKR) are disordered. At Arg462 the chain carries Asymmetric dimethylarginine.

This sequence belongs to the tektin family. In terms of processing, asymmetrically dimethylated at Arg-462 during flagellum resorption. Probably methylated by PRMT1.

The protein localises to the cytoplasm. It is found in the cytoskeleton. It localises to the flagellum axoneme. Its subcellular location is the flagellum basal body. Functionally, structural component of ciliary and flagellar microtubules. Plays a key role in the assembly or attachment of the inner dynein arm to microtubules in flagella and cilia. Forms filamentous polymers in the walls of ciliary and flagellar microtubules. The sequence is that of Tektin from Chlamydomonas reinhardtii (Chlamydomonas smithii).